Here is a 196-residue protein sequence, read N- to C-terminus: ATP-dependent Clp protease proteolytic subunit (196 aa).

Serine 101 functions as the Nucleophile in the catalytic mechanism. Histidine 126 is a catalytic residue.

Belongs to the peptidase S14 family. As to quaternary structure, component of the chloroplastic Clp protease core complex.

It is found in the plastid. The protein localises to the chloroplast stroma. It catalyses the reaction Hydrolysis of proteins to small peptides in the presence of ATP and magnesium. alpha-casein is the usual test substrate. In the absence of ATP, only oligopeptides shorter than five residues are hydrolyzed (such as succinyl-Leu-Tyr-|-NHMec, and Leu-Tyr-Leu-|-Tyr-Trp, in which cleavage of the -Tyr-|-Leu- and -Tyr-|-Trp bonds also occurs).. Functionally, cleaves peptides in various proteins in a process that requires ATP hydrolysis. Has a chymotrypsin-like activity. Plays a major role in the degradation of misfolded proteins. The sequence is that of ATP-dependent Clp protease proteolytic subunit from Populus trichocarpa (Western balsam poplar).